Here is a 61-residue protein sequence, read N- to C-terminus: Metallothionein-2D (61 aa).

Residue Met1 is modified to N-acetylmethionine. The tract at residues 1–29 (MDPNCSCATRDSCACASSCKCKECKCTSC) is beta. Positions 5, 7, 13, 15, 19, 21, 24, 26, 29, 33, 34, 36, 37, 41, 44, 48, 50, 57, 59, and 60 each coordinate a divalent metal cation. Residues 30–61 (KKSCCSCCPAGCTKCAQGCICKGASDKCSCCA) form an alpha region.

The protein belongs to the metallothionein superfamily. Type 1 family. Monomer.

In terms of biological role, metallothioneins have a high content of cysteine residues that bind various heavy metals; these proteins are transcriptionally regulated by both heavy metals and glucocorticoids. This chain is Metallothionein-2D, found in Oryctolagus cuniculus (Rabbit).